We begin with the raw amino-acid sequence, 66 residues long: UPF0370 protein CKO_00315 (66 aa).

Residues L4–I24 traverse the membrane as a helical segment. The segment at K39–K66 is disordered. A compositionally biased stretch (basic and acidic residues) spans L42–K51.

The protein belongs to the UPF0370 family.

Its subcellular location is the cell membrane. The chain is UPF0370 protein CKO_00315 from Citrobacter koseri (strain ATCC BAA-895 / CDC 4225-83 / SGSC4696).